Consider the following 801-residue polypeptide: PR domain zinc finger protein 4 (801 aa).

The SET domain occupies 412–529 (KQLVLRQSIV…PENELLFYYS (118 aa)). The segment at 545–566 (HLCNCGKECNSYTEFKAHLTSH) adopts a C2H2-type 1; atypical zinc-finger fold. 4 consecutive C2H2-type zinc fingers follow at residues 618 to 640 (HKCD…LKIH), 646 to 668 (YRCT…MVIH), 674 to 696 (LKCD…VLIH), and 702 to 724 (IKCP…LNSH). The C2H2-type 6; atypical zinc-finger motif lies at 730–752 (YVCEKCTKAYLTKYHLTRHLKTC). The interval 751–782 (TCKGPTSSSSAPEEEEEDDSEEEDLADSVGTE) is disordered. The segment covering 762–776 (PEEEEEDDSEEEDLA) has biased composition (acidic residues).

This sequence belongs to the class V-like SAM-binding methyltransferase superfamily.

It is found in the nucleus. Functionally, may function as a transcription factor involved in cell differentiation. This is PR domain zinc finger protein 4 (PRDM4) from Pongo abelii (Sumatran orangutan).